We begin with the raw amino-acid sequence, 84 residues long: Delta-stichotoxin-Shd3a (84 aa).

The N-terminal stretch at 1–19 is a signal peptide; the sequence is MAYLKIVLVALMLVLGVSA. Positions 20-33 are excised as a propeptide; the sequence is MRLSDQEDQDVSVV. 3 cysteine pairs are disulfide-bonded: Cys38/Cys78, Cys40/Cys68, and Cys61/Cys79. Position 83 is a lysine amide (Lys83).

The protein belongs to the sea anemone sodium channel inhibitory toxin family. Type II subfamily.

It is found in the secreted. Its subcellular location is the nematocyst. Binds specifically to voltage-gated sodium channels (Nav), thereby delaying their inactivation during signal transduction. This is Delta-stichotoxin-Shd3a from Stichodactyla haddoni (Saddle carpet anemone).